Here is a 137-residue protein sequence, read N- to C-terminus: Nucleoside diphosphate kinase (137 aa).

Residues Lys9, Phe57, Arg85, Thr91, Arg102, and Asn112 each coordinate ATP. His115 serves as the catalytic Pros-phosphohistidine intermediate.

The protein belongs to the NDK family. Homotetramer. It depends on Mg(2+) as a cofactor.

The protein localises to the cytoplasm. The catalysed reaction is a 2'-deoxyribonucleoside 5'-diphosphate + ATP = a 2'-deoxyribonucleoside 5'-triphosphate + ADP. It carries out the reaction a ribonucleoside 5'-diphosphate + ATP = a ribonucleoside 5'-triphosphate + ADP. Major role in the synthesis of nucleoside triphosphates other than ATP. The ATP gamma phosphate is transferred to the NDP beta phosphate via a ping-pong mechanism, using a phosphorylated active-site intermediate. The protein is Nucleoside diphosphate kinase of Campylobacter jejuni subsp. jejuni serotype O:6 (strain 81116 / NCTC 11828).